The sequence spans 136 residues: Large ribosomal subunit protein eL27B (136 aa).

Belongs to the eukaryotic ribosomal protein eL27 family. Component of the large ribosomal subunit (LSU). Mature yeast ribosomes consist of a small (40S) and a large (60S) subunit. The 40S small subunit contains 1 molecule of ribosomal RNA (18S rRNA) and at least 33 different proteins. The large 60S subunit contains 3 rRNA molecules (25S, 5.8S and 5S rRNA) and at least 46 different proteins.

The protein localises to the cytoplasm. In terms of biological role, component of the ribosome, a large ribonucleoprotein complex responsible for the synthesis of proteins in the cell. The small ribosomal subunit (SSU) binds messenger RNAs (mRNAs) and translates the encoded message by selecting cognate aminoacyl-transfer RNA (tRNA) molecules. The large subunit (LSU) contains the ribosomal catalytic site termed the peptidyl transferase center (PTC), which catalyzes the formation of peptide bonds, thereby polymerizing the amino acids delivered by tRNAs into a polypeptide chain. The nascent polypeptides leave the ribosome through a tunnel in the LSU and interact with protein factors that function in enzymatic processing, targeting, and the membrane insertion of nascent chains at the exit of the ribosomal tunnel. The protein is Large ribosomal subunit protein eL27B (rpl2702) of Schizosaccharomyces pombe (strain 972 / ATCC 24843) (Fission yeast).